The following is a 135-amino-acid chain: S-protein homolog 29 (135 aa).

The N-terminal stretch at 1 to 24 (MKNSSKIFVVLSIILFYVISSCHG) is a signal peptide. N-linked (GlcNAc...) asparagine glycosylation is present at Asn110.

Belongs to the plant self-incompatibility (S1) protein family.

Its subcellular location is the secreted. In Arabidopsis thaliana (Mouse-ear cress), this protein is S-protein homolog 29.